A 730-amino-acid polypeptide reads, in one-letter code: Cyclin-T2 (730 aa).

Residues 1-300 (MASGRGASSR…SVTGVPTNPS (300 aa)) are interaction with MDFIC and MDFI. In terms of domain architecture, Cyclin N-terminal spans 12–147 (FFTREQLENT…IMLQTLGFEI (136 aa)). Positions 250 to 300 (RLKKIRNWRANQAARKPKVDGQVSETPLLGSSLVQNSILVDSVTGVPTNPS) are interaction with POLR2A. Polar residues-rich tracts occupy residues 341 to 350 (TSYGLSSHQE) and 360 to 389 (TEQLYSQKQETSLSGSQYNINFQQGPSISL). The interval 341 to 430 (TSYGLSSHQE…GPISTTPGII (90 aa)) is disordered. Over residues 398–412 (DKISDHSSVKQEYTH) the composition is skewed to basic and acidic residues. Residue lysine 407 forms a Glycyl lysine isopeptide (Lys-Gly) (interchain with G-Cter in SUMO2) linkage. Phosphoserine is present on serine 480. A disordered region spans residues 497 to 652 (DKKEKSGSLK…SSSSSSSSVK (156 aa)). Basic and acidic residues-rich tracts occupy residues 517–543 (SASKEELKMKIKVSSSERHSSSDEGSG) and 552–565 (ISRDHKEKHKEHPS). The span at 566–578 (SRHHTSSHKHSHS) shows a compositional bias: basic residues. The span at 579 to 588 (HSGSSSGGSK) shows a compositional bias: low complexity. Residue serine 601 is modified to Phosphoserine. 2 stretches are compositionally biased toward low complexity: residues 606 to 616 (SSDGISSSSSS) and 637 to 652 (SSKSSGSSSSSSSSVK).

It belongs to the cyclin family. Cyclin C subfamily. As to quaternary structure, interacts with CDK9 to form P-TEFb. Interacts with POLR2A (via the C-terminal domain (CTD)); mediates transcriptional activity. Interacts with HEXIM1; mediates formation of a tripartite complex with KPNA2. Interacts with HEXIM2. Interacts with PKN1; enhances MYOD1-dependent transcription. P-TEFB complex interacts with RB1; promotes phosphorylation of RB1. P-TEFB complex interacts with MYOD1; promotes the transcriptional activity of MYOD1 through its CDK9-mediated phosphorylation. Interacts with MDFI and MDFIC. Interacts with MON1B; down-regulates CCNT2-mediated activation of viral promoters during herpes simplex virus 1/HHV-1 infection. In terms of assembly, (Microbial infection) Interacts with HIV-2 and SIV Tat. Does not bind efficiently to the transactivation domain of the HIV-1 Tat. As to expression, ubiquitously expressed.

It localises to the cytoplasm. It is found in the perinuclear region. The protein localises to the nucleus. Functionally, regulatory subunit of the cyclin-dependent kinase pair (CDK9/cyclin T) complex, also called positive transcription elongation factor B (P-TEFB), which is proposed to facilitate the transition from abortive to production elongation by phosphorylating the CTD (carboxy-terminal domain) of the large subunit of RNA polymerase II (RNAP II). The activity of this complex is regulated by binding with 7SK snRNA. Plays a role during muscle differentiation; P-TEFB complex interacts with MYOD1; this tripartite complex promotes the transcriptional activity of MYOD1 through its CDK9-mediated phosphorylation and binds the chromatin of promoters and enhancers of muscle-specific genes; this event correlates with hyperphosphorylation of the CTD domain of RNA pol II. In addition, enhances MYOD1-dependent transcription through interaction with PKN1. Involved in early embryo development. Its function is as follows. (Microbial infection) Promotes transcriptional activation of early and late herpes simplex virus 1/HHV-1 promoters. The sequence is that of Cyclin-T2 from Homo sapiens (Human).